The following is a 578-amino-acid chain: Proline--tRNA ligase (578 aa).

It belongs to the class-II aminoacyl-tRNA synthetase family. ProS type 1 subfamily. Homodimer.

Its subcellular location is the cytoplasm. The enzyme catalyses tRNA(Pro) + L-proline + ATP = L-prolyl-tRNA(Pro) + AMP + diphosphate. In terms of biological role, catalyzes the attachment of proline to tRNA(Pro) in a two-step reaction: proline is first activated by ATP to form Pro-AMP and then transferred to the acceptor end of tRNA(Pro). As ProRS can inadvertently accommodate and process non-cognate amino acids such as alanine and cysteine, to avoid such errors it has two additional distinct editing activities against alanine. One activity is designated as 'pretransfer' editing and involves the tRNA(Pro)-independent hydrolysis of activated Ala-AMP. The other activity is designated 'posttransfer' editing and involves deacylation of mischarged Ala-tRNA(Pro). The misacylated Cys-tRNA(Pro) is not edited by ProRS. This chain is Proline--tRNA ligase, found in Burkholderia mallei (strain ATCC 23344).